Reading from the N-terminus, the 70-residue chain is Large ribosomal subunit protein bL31 (70 aa).

Residues C16, C18, C37, and C40 each coordinate Zn(2+).

This sequence belongs to the bacterial ribosomal protein bL31 family. Type A subfamily. As to quaternary structure, part of the 50S ribosomal subunit. Requires Zn(2+) as cofactor.

Its function is as follows. Binds the 23S rRNA. This is Large ribosomal subunit protein bL31 from Klebsiella pneumoniae (strain 342).